The chain runs to 614 residues: Replication protein A 70 kDa DNA-binding subunit (614 aa).

A disordered region spans residues 112-178; sequence GNPVPYNEGQ…SSVKTPGGTQ (67 aa). Polar residues-rich tracts occupy residues 120–130 and 158–178; these read GQGQQRSSAPT and PSNQ…GGTQ. Positions 194 to 278 form a DNA-binding region, OB; that stretch reads WTICARVTQK…VKNDYEITFN (85 aa). The segment at 478–500 adopts a C4-type zinc-finger fold; that stretch reads CPSQDCNKKVIDQQNGLYRCEKC.

This sequence belongs to the replication factor A protein 1 family. As to quaternary structure, component of the heterotrimeric canonical replication protein A complex (RPA).

The protein resides in the nucleus. It localises to the PML body. Functionally, as part of the heterotrimeric replication protein A complex (RPA/RP-A), binds and stabilizes single-stranded DNA intermediates, that form during DNA replication or upon DNA stress. It prevents their reannealing and in parallel, recruits and activates different proteins and complexes involved in DNA metabolism. Thereby, it plays an essential role both in DNA replication and the cellular response to DNA damage. This is Replication protein A 70 kDa DNA-binding subunit (RPA1) from Gallus gallus (Chicken).